Here is a 244-residue protein sequence, read N- to C-terminus: 5-oxoprolinase subunit A (244 aa).

Belongs to the LamB/PxpA family. In terms of assembly, forms a complex composed of PxpA, PxpB and PxpC.

It carries out the reaction 5-oxo-L-proline + ATP + 2 H2O = L-glutamate + ADP + phosphate + H(+). In terms of biological role, catalyzes the cleavage of 5-oxoproline to form L-glutamate coupled to the hydrolysis of ATP to ADP and inorganic phosphate. This Escherichia fergusonii (strain ATCC 35469 / DSM 13698 / CCUG 18766 / IAM 14443 / JCM 21226 / LMG 7866 / NBRC 102419 / NCTC 12128 / CDC 0568-73) protein is 5-oxoprolinase subunit A.